Consider the following 335-residue polypeptide: Eukaryotic translation initiation factor 3 subunit I (335 aa).

WD repeat units follow at residues 8-47 (GHER…RLGT), 50-91 (GHQG…KVWD), 145-184 (CTES…QLEN), 189-228 (EFDN…ILKT), and 286-325 (GHFG…FDFM).

The protein belongs to the eIF-3 subunit I family. Component of the eukaryotic translation initiation factor 3 (eIF-3) complex.

The protein localises to the cytoplasm. Its function is as follows. Component of the eukaryotic translation initiation factor 3 (eIF-3) complex, which is involved in protein synthesis of a specialized repertoire of mRNAs and, together with other initiation factors, stimulates binding of mRNA and methionyl-tRNAi to the 40S ribosome. The eIF-3 complex specifically targets and initiates translation of a subset of mRNAs involved in cell proliferation. This Aspergillus oryzae (strain ATCC 42149 / RIB 40) (Yellow koji mold) protein is Eukaryotic translation initiation factor 3 subunit I (tif34).